Consider the following 448-residue polypeptide: Antizyme inhibitor 1 (448 aa).

The protein belongs to the Orn/Lys/Arg decarboxylase class-II family. ODC antizyme inhibitor subfamily. As to quaternary structure, monomer. Interacts with OAZ1 and OAZ3; this interaction disrupts the interaction between the antizyme and ODC1. In terms of processing, ubiquitinated, leading to its proteasomal degradation; a process that is reduced in presence of antizyme OAZ1.

The protein localises to the nucleus. In terms of biological role, antizyme inhibitor (AZI) protein that positively regulates ornithine decarboxylase (ODC) activity and polyamine uptake. AZI is an enzymatically inactive ODC homolog that counteracts the negative effect of ODC antizymes (AZs) OAZ1, OAZ2 and OAZ3 on ODC activity by competing with ODC for antizyme-binding. Inhibits antizyme-dependent ODC degradation and releases ODC monomers from their inactive complex with antizymes, leading to formation of the catalytically active ODC homodimer and restoring polyamine production. The chain is Antizyme inhibitor 1 (AZIN1) from Pongo abelii (Sumatran orangutan).